The following is a 341-amino-acid chain: LIM and senescent cell antigen-like-containing domain protein 2 (341 aa).

5 consecutive LIM zinc-binding domains span residues 13–74, 76–133, 138–195, 196–255, and 256–315; these read AMCQ…LFAP, CGFC…EKAK, FICQ…KMGI, PICG…LFGD, and VCYN…FPLE. At S328 the chain carries Phosphoserine.

In terms of assembly, interacts with integrin-linked protein kinase 1 (ILK) via the first LIM domain, and in competition with LIMS1. Part of the heterotrimeric IPP complex composed of integrin-linked kinase (ILK), LIMS1 or LIMS2, and PARVA. Interacts with TGFB1I1. As to expression, detected in heart, lung, kidney, liver, urinary bladder, fat, skin, skeletal muscle, uterus, large intestine and testis.

It localises to the cell junction. The protein localises to the focal adhesion. It is found in the cell membrane. Its function is as follows. Adapter protein in a cytoplasmic complex linking beta-integrins to the actin cytoskeleton, bridges the complex to cell surface receptor tyrosine kinases and growth factor receptors. This is LIM and senescent cell antigen-like-containing domain protein 2 (Lims2) from Mus musculus (Mouse).